A 203-amino-acid polypeptide reads, in one-letter code: Akirin-2 (203 aa).

Phosphoserine occurs at positions 18 and 21. Residues 22-27 (PKRRRC) carry the Nuclear localization signal motif. Serine 57 is subject to Phosphoserine. The SYVS motif motif lies at 200 to 203 (SYVS).

The protein belongs to the akirin family. In terms of assembly, homodimer. Interacts with IPO9; the interaction is direct. Associates with 20S and 26S proteasomes. Interacts with SMARCD1; promoting SWI/SNF complex recruitment. Interacts with NFKBIZ. Interacts with YWHAB. Post-translationally, polyubiquitinated. Polyubiquitination is dependent of UBR5 that extends pre-ubiquitinated AKIRIN2. In terms of tissue distribution, widely expressed. Most abundant in the lung, followed by the skeletal muscle, heart, liver, fat, thymus, lymph node, small intestine, kidney and spleen. In skeletal muscle, expressed at higher level in fast extensor digitorum longus (EDL) and longissimus lumborum (LL) muscles than in slow soleus (SOL) muscles.

It is found in the nucleus. Its subcellular location is the cytoplasm. The protein resides in the membrane. Its function is as follows. Molecular adapter that acts as a bridge between a variety of multiprotein complexes, and which is involved in embryonic development, immunity, myogenesis and brain development. Plays a key role in nuclear protein degradation by promoting import of proteasomes into the nucleus: directly binds to fully assembled 20S proteasomes at one end and to nuclear import receptor IPO9 at the other end, bridging them together and mediating the import of pre-assembled proteasome complexes through the nuclear pore. Involved in innate immunity by regulating the production of interleukin-6 (IL6) downstream of Toll-like receptor (TLR): acts by bridging the NF-kappa-B inhibitor NFKBIZ and the SWI/SNF complex, leading to promote induction of IL6. Also involved in adaptive immunity by promoting B-cell activation. Involved in brain development: required for the survival and proliferation of cerebral cortical progenitor cells. Involved in myogenesis: required for skeletal muscle formation and skeletal development, possibly by regulating expression of muscle differentiation factors. The sequence is that of Akirin-2 from Sus scrofa (Pig).